The chain runs to 843 residues: Probable cleavage and polyadenylation specificity factor subunit 2 (843 aa).

Over residues 414–425 (AEETRLRMERAR) the composition is skewed to basic and acidic residues. Disordered stretches follow at residues 414 to 443 (AEET…DIAA) and 691 to 753 (DKNR…TKGK). Residues 432–441 (ESDDSDDDDI) are compositionally biased toward acidic residues. The span at 732–746 (SGKEVENGHTNDSRT) shows a compositional bias: basic and acidic residues.

It belongs to the metallo-beta-lactamase superfamily. RNA-metabolizing metallo-beta-lactamase-like family. CPSF2/YSH1 subfamily. As to quaternary structure, CPSF is a heterotetramer composed of four distinct subunits 160, 100, 70 and 30 kDa.

It is found in the nucleus. Its function is as follows. CPSF plays a key role in pre-mRNA 3'-end formation, recognizing the AAUAAA signal sequence and interacting with poly(A)polymerase and other factors to bring about cleavage and poly(A) addition. The chain is Probable cleavage and polyadenylation specificity factor subunit 2 (cpsf-2) from Caenorhabditis elegans.